Consider the following 270-residue polypeptide: Undecaprenyl-diphosphatase 1 (270 aa).

Helical transmembrane passes span 41-61 (IEGFSFELLMNAGSLIAVLLV), 88-108 (FRFIIYLIIATIPAGVIGVLF), 117-137 (KDGVRITAVTLLITGLALFLI), 192-212 (FSFLLYIPVSLGGTILSITDI), 218-238 (LGELFLPYLFAFIASVIATYF), and 250-270 (GNLVYFSIYCFVIGIAVLIFA).

It belongs to the UppP family.

The protein resides in the cell membrane. It carries out the reaction di-trans,octa-cis-undecaprenyl diphosphate + H2O = di-trans,octa-cis-undecaprenyl phosphate + phosphate + H(+). Its function is as follows. Catalyzes the dephosphorylation of undecaprenyl diphosphate (UPP). Confers resistance to bacitracin. This is Undecaprenyl-diphosphatase 1 from Bacillus licheniformis (strain ATCC 14580 / DSM 13 / JCM 2505 / CCUG 7422 / NBRC 12200 / NCIMB 9375 / NCTC 10341 / NRRL NRS-1264 / Gibson 46).